Reading from the N-terminus, the 474-residue chain is Nuclear receptor ROR-alpha B (474 aa).

Residues 14 to 89 (SIPCKICGDK…VGMSRDAVKF (76 aa)) constitute a DNA-binding region (nuclear receptor). 2 NR C4-type zinc fingers span residues 17–37 (CKICGDKSSGIHYGVITCEGC) and 53–72 (CPRQKSCLIDRTSRNRCQHC). The segment covering 98–124 (DSLFAEVQKHRQQQQDDKTGDESEKNQ) has biased composition (basic and acidic residues). A disordered region spans residues 98-144 (DSLFAEVQKHRQQQQDDKTGDESEKNQESQAPGEAEPLTPSYALSSS). Residues 223–461 (DLEHLSENIC…TRFPPLYKEL (239 aa)) enclose the NR LBD domain. An AF-2 region spans residues 450–461 (VHTRFPPLYKEL).

Belongs to the nuclear hormone receptor family.

It localises to the nucleus. Functionally, nuclear receptor that binds DNA as a monomer to ROR response elements (RORE). Required for proper cerebellum development. The polypeptide is Nuclear receptor ROR-alpha B (rorab) (Danio rerio (Zebrafish)).